Here is a 474-residue protein sequence, read N- to C-terminus: tRNA-2-methylthio-N(6)-dimethylallyladenosine synthase (474 aa).

The MTTase N-terminal domain maps to 3 to 120; sequence KKLHIKTWGC…LPEMINSVRG (118 aa). Cysteine 12, cysteine 49, cysteine 83, cysteine 157, cysteine 161, and cysteine 164 together coordinate [4Fe-4S] cluster. The 233-residue stretch at 143–375 folds into the Radical SAM core domain; that stretch reads RAEGPTAFVS…QERINQQAMA (233 aa). The 64-residue stretch at 378–441 folds into the TRAM domain; the sequence is RRMLGTTQRI…PNSLRGKVVR (64 aa).

The protein belongs to the methylthiotransferase family. MiaB subfamily. As to quaternary structure, monomer. [4Fe-4S] cluster is required as a cofactor.

The protein localises to the cytoplasm. The enzyme catalyses N(6)-dimethylallyladenosine(37) in tRNA + (sulfur carrier)-SH + AH2 + 2 S-adenosyl-L-methionine = 2-methylsulfanyl-N(6)-dimethylallyladenosine(37) in tRNA + (sulfur carrier)-H + 5'-deoxyadenosine + L-methionine + A + S-adenosyl-L-homocysteine + 2 H(+). Its function is as follows. Catalyzes the methylthiolation of N6-(dimethylallyl)adenosine (i(6)A), leading to the formation of 2-methylthio-N6-(dimethylallyl)adenosine (ms(2)i(6)A) at position 37 in tRNAs that read codons beginning with uridine. The protein is tRNA-2-methylthio-N(6)-dimethylallyladenosine synthase of Escherichia coli (strain UTI89 / UPEC).